The chain runs to 340 residues: Dihydroorotase (340 aa).

Residues H14 and H16 each coordinate Zn(2+). Residues 16–18 and N42 contribute to the substrate site; that span reads HLR. Residues K100, H137, and H175 each coordinate Zn(2+). The residue at position 100 (K100) is an N6-carboxylysine. H137 provides a ligand contact to substrate. Residue L220 coordinates substrate. D248 contacts Zn(2+). D248 is an active-site residue. H252 and A264 together coordinate substrate.

The protein belongs to the metallo-dependent hydrolases superfamily. DHOase family. Class II DHOase subfamily. As to quaternary structure, homodimer. It depends on Zn(2+) as a cofactor.

It carries out the reaction (S)-dihydroorotate + H2O = N-carbamoyl-L-aspartate + H(+). It participates in pyrimidine metabolism; UMP biosynthesis via de novo pathway; (S)-dihydroorotate from bicarbonate: step 3/3. Its function is as follows. Catalyzes the reversible cyclization of carbamoyl aspartate to dihydroorotate. The polypeptide is Dihydroorotase (Sphingopyxis alaskensis (strain DSM 13593 / LMG 18877 / RB2256) (Sphingomonas alaskensis)).